Consider the following 254-residue polypeptide: tRNA 2'-phosphotransferase 1 (254 aa).

Position 1 is an N-acetylmethionine (M1). Disordered stretches follow at residues 1–30 and 225–254; these read MNSFGGRRRETAGPKGRRAHRPPQDQDRDV and RKPLSLAGNEEKEHQRDSKHSSRGRGMTQQ. The span at 233-244 shows a compositional bias: basic and acidic residues; that stretch reads NEEKEHQRDSKH.

The protein belongs to the KptA/TPT1 family.

It carries out the reaction 2'-phospho-[ligated tRNA] + NAD(+) = mature tRNA + ADP-alpha-D-ribose 1'',2''-cyclic phosphate + nicotinamide. Its function is as follows. Catalyzes the last step of tRNA splicing, the transfer of the splice junction 2'-phosphate from ligated tRNA to NAD to produce ADP-ribose 1''-2'' cyclic phosphate. The sequence is that of tRNA 2'-phosphotransferase 1 (TRPT1) from Bos taurus (Bovine).